The following is a 320-amino-acid chain: o-succinylbenzoate synthase (320 aa).

Lysine 133 acts as the Proton donor in catalysis. Mg(2+) contacts are provided by aspartate 161, glutamate 190, and aspartate 213. Lysine 235 acts as the Proton acceptor in catalysis.

It belongs to the mandelate racemase/muconate lactonizing enzyme family. MenC type 1 subfamily. The cofactor is a divalent metal cation.

The catalysed reaction is (1R,6R)-6-hydroxy-2-succinyl-cyclohexa-2,4-diene-1-carboxylate = 2-succinylbenzoate + H2O. The protein operates within quinol/quinone metabolism; 1,4-dihydroxy-2-naphthoate biosynthesis; 1,4-dihydroxy-2-naphthoate from chorismate: step 4/7. It functions in the pathway quinol/quinone metabolism; menaquinone biosynthesis. Functionally, converts 2-succinyl-6-hydroxy-2,4-cyclohexadiene-1-carboxylate (SHCHC) to 2-succinylbenzoate (OSB). The chain is o-succinylbenzoate synthase from Escherichia coli O17:K52:H18 (strain UMN026 / ExPEC).